The primary structure comprises 393 residues: uncharacterized protein (393 aa).

Residues Ala-12–Glu-70 enclose the TRAM domain. Positions 83, 89, 92, and 166 each coordinate [4Fe-4S] cluster. The S-adenosyl-L-methionine site is built by Gln-221, Tyr-250, Glu-273, and Asp-316. The active-site Nucleophile is the Cys-343.

This sequence belongs to the class I-like SAM-binding methyltransferase superfamily. RNA M5U methyltransferase family.

This is an uncharacterized protein from Bdellovibrio bacteriovorus (strain ATCC 15356 / DSM 50701 / NCIMB 9529 / HD100).